The sequence spans 70 residues: NADH dehydrogenase [ubiquinone] 1 alpha subcomplex subunit 1 (70 aa).

The chain crosses the membrane as a helical span at residues 1–21 (MWFEILPGLSVMGVCLLIPGL).

This sequence belongs to the complex I NDUFA1 subunit family. Complex I is composed of 45 different subunits. Primarily expressed in heart and skeletal muscle.

Its subcellular location is the mitochondrion inner membrane. Its function is as follows. Accessory subunit of the mitochondrial membrane respiratory chain NADH dehydrogenase (Complex I), that is believed not to be involved in catalysis. Complex I functions in the transfer of electrons from NADH to the respiratory chain. The immediate electron acceptor for the enzyme is believed to be ubiquinone. The sequence is that of NADH dehydrogenase [ubiquinone] 1 alpha subcomplex subunit 1 (NDUFA1) from Homo sapiens (Human).